The chain runs to 101 residues: uncharacterized protein (101 aa).

This is an uncharacterized protein from Escherichia coli O157:H7.